The following is a 205-amino-acid chain: MIRYPNGKSYQPIQPIGTKKRISGESSYSNRGMTLEADLNETNQYYLVNGIAVIHKKPTPVQIVNVDYPKRSAAVIKEAYFKQSSTTDYNGVYRGRYIDFEAKETKSTTSFPLKNFHEHQIEHMKQVEKQGGICFVIISAFGSVYYLPASDLFFFWERQKLNGRKSISKDELMEAGHLMTLGYSPRIDYIKVVETLHFSDESEYQ.

The disordered stretch occupies residues 1 to 26 (MIRYPNGKSYQPIQPIGTKKRISGES). Mg(2+)-binding residues include Thr-86, Asp-88, Glu-101, and Gln-120.

The protein belongs to the RecU family. It depends on Mg(2+) as a cofactor.

The protein resides in the cytoplasm. The catalysed reaction is Endonucleolytic cleavage at a junction such as a reciprocal single-stranded crossover between two homologous DNA duplexes (Holliday junction).. Its function is as follows. Endonuclease that resolves Holliday junction intermediates in genetic recombination. Cleaves mobile four-strand junctions by introducing symmetrical nicks in paired strands. Promotes annealing of linear ssDNA with homologous dsDNA. Required for DNA repair, homologous recombination and chromosome segregation. The sequence is that of Holliday junction resolvase RecU from Bacillus pumilus (strain SAFR-032).